A 101-amino-acid chain; its full sequence is Large ribosomal subunit protein uL23 (101 aa).

This sequence belongs to the universal ribosomal protein uL23 family. As to quaternary structure, part of the 50S ribosomal subunit. Contacts protein L29, and trigger factor when it is bound to the ribosome.

Its function is as follows. One of the early assembly proteins it binds 23S rRNA. One of the proteins that surrounds the polypeptide exit tunnel on the outside of the ribosome. Forms the main docking site for trigger factor binding to the ribosome. This is Large ribosomal subunit protein uL23 from Tolumonas auensis (strain DSM 9187 / NBRC 110442 / TA 4).